The chain runs to 191 residues: Glucose-6-phosphate 1-dehydrogenase (191 aa).

Alanine 2 carries the N-acetylalanine modification. At serine 8 the chain carries Phosphoserine. Residue threonine 10 is modified to Phosphothreonine. NADP(+) contacts are provided by residues 38-45 (GASGDLAK) and tyrosine 86. D-glucose 6-phosphate is bound at residue aspartate 101. Residue histidine 106 is the Proton acceptor of the active site. Position 163 (arginine 163) interacts with NADP(+). Lysine 173 carries the post-translational modification N6-acetyllysine. NADP(+) contacts are provided by tyrosine 179 and tryptophan 185. Tyrosine 179 is modified (phosphotyrosine).

The protein belongs to the glucose-6-phosphate dehydrogenase family. In terms of assembly, homotetramer; dimer of dimers. Interacts with SIRT2; the interaction is enhanced by H(2)O(2) treatment. Forms a ternary complex with ALDOB and TP53; this interaction is direct. ALDOB stabilizes the complex inhibiting G6PD activity and keeping oxidative pentose phosphate metabolism in check. Post-translationally, acetylated by ELP3; acetylation inhibits its homodimerization and enzyme activity. Deacetylated by SIRT2; deacetylation stimulates its enzyme activity.

Its subcellular location is the cytoplasm. It is found in the cytosol. It localises to the membrane. The catalysed reaction is D-glucose 6-phosphate + NADP(+) = 6-phospho-D-glucono-1,5-lactone + NADPH + H(+). It participates in carbohydrate degradation; pentose phosphate pathway; D-ribulose 5-phosphate from D-glucose 6-phosphate (oxidative stage): step 1/3. Cytosolic glucose-6-phosphate dehydrogenase that catalyzes the first and rate-limiting step of the oxidative branch within the pentose phosphate pathway/shunt, an alternative route to glycolysis for the dissimilation of carbohydrates and a major source of reducing power and metabolic intermediates for fatty acid and nucleic acid biosynthetic processes. In Didelphis virginiana (North American opossum), this protein is Glucose-6-phosphate 1-dehydrogenase (G6PD).